Here is a 358-residue protein sequence, read N- to C-terminus: Uroporphyrinogen decarboxylase (358 aa).

Residues 29-33 (RQAGR), Asp79, Tyr156, Thr211, and His329 each bind substrate.

It belongs to the uroporphyrinogen decarboxylase family. Homodimer.

It localises to the cytoplasm. It catalyses the reaction uroporphyrinogen III + 4 H(+) = coproporphyrinogen III + 4 CO2. Its pathway is porphyrin-containing compound metabolism; protoporphyrin-IX biosynthesis; coproporphyrinogen-III from 5-aminolevulinate: step 4/4. Functionally, catalyzes the decarboxylation of four acetate groups of uroporphyrinogen-III to yield coproporphyrinogen-III. The polypeptide is Uroporphyrinogen decarboxylase (Idiomarina loihiensis (strain ATCC BAA-735 / DSM 15497 / L2-TR)).